We begin with the raw amino-acid sequence, 426 residues long: MKLQKPKGTQDILPQESAKWQYVEDFARKTFRKYNYGEIRTPIFEHYEVISRSVGDTTDIVTKEMYDFYDKGDRHITLRPEGTAPVVRSYVENKLFAPEVQKPVKVYYMGSMFRYERPQAGRLREFHQIGAECFGSSNPATDVEMIAMAAQFFKDIGITNVSLELNSLGNPESRAAYRQALIDYLTPLKASLSADSQRRLEENPLRVLDSKEPEDKAAVEGAPSILDYLDEESSAYFAAVRSMLETLQIPYVINTNMVRGLDYYNHTIFEFTTEVAGSQLTICAGGRYDGLVAYFGGPETPGVGFGMGLERLLLVLDKQGVELPIETALDVYVAVLGADANGRALELVQALRAQGFAAERDYLDRKLKAQFKSADNFKAKTLITLGESEVESGRVTVKNNHNREEITVSLDQIQENYQLIFEKLGF.

The protein belongs to the class-II aminoacyl-tRNA synthetase family. Homodimer.

It localises to the cytoplasm. It carries out the reaction tRNA(His) + L-histidine + ATP = L-histidyl-tRNA(His) + AMP + diphosphate + H(+). This chain is Histidine--tRNA ligase, found in Streptococcus sanguinis (strain SK36).